We begin with the raw amino-acid sequence, 341 residues long: Anthranilate phosphoribosyltransferase (341 aa).

5-phospho-alpha-D-ribose 1-diphosphate is bound by residues glycine 80, 83-84 (GD), threonine 88, 90-93 (NIST), 108-116 (KHGNRAMSS), and serine 120. Residue glycine 80 coordinates anthranilate. Serine 92 provides a ligand contact to Mg(2+). Asparagine 111 is an anthranilate binding site. Arginine 166 is an anthranilate binding site. 2 residues coordinate Mg(2+): aspartate 225 and glutamate 226.

It belongs to the anthranilate phosphoribosyltransferase family. Homodimer. Mg(2+) serves as cofactor.

The enzyme catalyses N-(5-phospho-beta-D-ribosyl)anthranilate + diphosphate = 5-phospho-alpha-D-ribose 1-diphosphate + anthranilate. It functions in the pathway amino-acid biosynthesis; L-tryptophan biosynthesis; L-tryptophan from chorismate: step 2/5. In terms of biological role, catalyzes the transfer of the phosphoribosyl group of 5-phosphorylribose-1-pyrophosphate (PRPP) to anthranilate to yield N-(5'-phosphoribosyl)-anthranilate (PRA). This chain is Anthranilate phosphoribosyltransferase, found in Roseiflexus sp. (strain RS-1).